The sequence spans 307 residues: Probable GTP 3',8-cyclase (307 aa).

The region spanning 4-222 (ALGREVRSVR…RTFHSREVYR (219 aa)) is the Radical SAM core domain. Residue R13 participates in GTP binding. Residues C20 and C24 each contribute to the [4Fe-4S] cluster site. Y26 lines the S-adenosyl-L-methionine pocket. C27 is a binding site for [4Fe-4S] cluster. K60 is a binding site for GTP. Residues G64 and S112 each coordinate S-adenosyl-L-methionine. K150 provides a ligand contact to GTP. Residues C240 and C243 each coordinate [4Fe-4S] cluster. 245–247 (RIR) contacts GTP. C257 is a [4Fe-4S] cluster binding site.

The protein belongs to the radical SAM superfamily. MoaA family. It depends on [4Fe-4S] cluster as a cofactor.

It carries out the reaction GTP + AH2 + S-adenosyl-L-methionine = (8S)-3',8-cyclo-7,8-dihydroguanosine 5'-triphosphate + 5'-deoxyadenosine + L-methionine + A + H(+). It functions in the pathway cofactor biosynthesis; molybdopterin biosynthesis. In terms of biological role, catalyzes the cyclization of GTP to (8S)-3',8-cyclo-7,8-dihydroguanosine 5'-triphosphate. This Methanopyrus kandleri (strain AV19 / DSM 6324 / JCM 9639 / NBRC 100938) protein is Probable GTP 3',8-cyclase.